The primary structure comprises 169 residues: Menaquinol:cytochrome c reductase iron-sulfur subunit (169 aa).

The Rieske domain maps to 62 to 160 (EPKRFDFKVK…FEVKDGKLYL (99 aa)). Positions 102, 104, 123, and 126 each coordinate [2Fe-2S] cluster. Cysteines 107 and 125 form a disulfide.

Belongs to the Rieske iron-sulfur protein family. As to quaternary structure, the main subunits of the menaquinol:cytochrome c complex are a Rieske-type iron-sulfur protein (QcrA), a cytochrome b (QcrB) and a cytochrome c (QcrC). [2Fe-2S] cluster is required as a cofactor.

Component of the menaquinol:cytochrome c reductase complex. The Rieske protein is a high potential 2Fe-2S protein. This chain is Menaquinol:cytochrome c reductase iron-sulfur subunit (qcrA), found in Geobacillus thermodenitrificans.